Reading from the N-terminus, the 425-residue chain is MLDLKRIRTDFDVVAKKLATRGVDQETLTTLKELDIKRRELLIKAEEAKAQRNVASAAIAQAKRNKENADEQIAAMQTLSADIKAIDAELADVDANLQSMVTVLPNTPADDVPLGADEDENVEVRRWGTPREFDFETKAHWDLGESLGILDWERGAKVTGSRFLFYKGLGARLERAIYSFMLDEHAKEGYTEVIPPYMVNHDSMFGTGQYPKFKEDTFELADSPFVLIPTAEVPLTNYYRDEIIDGKELPIYFTAMSPSFRSEAGSAGRDTRGLIRLHQFHKVEMVKFAKPEESYQELEKMTANAENILQKLNLPYRVITLCTGDMGFSAAKTYDLEVWIPAQNTYREISSCSNTEDFQARRAQIRYRDEVDGKVRLLHTLNGSGLAVGRTVAAILENYQNEDGSVTIPEVLRPYMGNIDIIKPN.

230–232 (TAE) lines the L-serine pocket. 261–263 (RSE) is an ATP binding site. E284 contacts L-serine. 348-351 (EISS) contacts ATP. Residue S384 participates in L-serine binding.

This sequence belongs to the class-II aminoacyl-tRNA synthetase family. Type-1 seryl-tRNA synthetase subfamily. In terms of assembly, homodimer. The tRNA molecule binds across the dimer.

The protein resides in the cytoplasm. The catalysed reaction is tRNA(Ser) + L-serine + ATP = L-seryl-tRNA(Ser) + AMP + diphosphate + H(+). It carries out the reaction tRNA(Sec) + L-serine + ATP = L-seryl-tRNA(Sec) + AMP + diphosphate + H(+). It participates in aminoacyl-tRNA biosynthesis; selenocysteinyl-tRNA(Sec) biosynthesis; L-seryl-tRNA(Sec) from L-serine and tRNA(Sec): step 1/1. Its function is as follows. Catalyzes the attachment of serine to tRNA(Ser). Is also able to aminoacylate tRNA(Sec) with serine, to form the misacylated tRNA L-seryl-tRNA(Sec), which will be further converted into selenocysteinyl-tRNA(Sec). In Streptococcus agalactiae serotype Ia (strain ATCC 27591 / A909 / CDC SS700), this protein is Serine--tRNA ligase.